Here is a 240-residue protein sequence, read N- to C-terminus: Uridylate kinase (240 aa).

13 to 16 contributes to the ATP binding site; it reads KLSG. Residues 21 to 26 are involved in allosteric activation by GTP; sequence GEKGFG. A UMP-binding site is contributed by Gly55. ATP contacts are provided by Gly56 and Arg60. UMP-binding positions include Asp75 and 136–143; that span reads IGNPYFST. Positions 164, 170, and 173 each coordinate ATP.

This sequence belongs to the UMP kinase family. Homohexamer.

It localises to the cytoplasm. It catalyses the reaction UMP + ATP = UDP + ADP. It participates in pyrimidine metabolism; CTP biosynthesis via de novo pathway; UDP from UMP (UMPK route): step 1/1. Its activity is regulated as follows. Allosterically activated by GTP. Inhibited by UTP. Its function is as follows. Catalyzes the reversible phosphorylation of UMP to UDP. This Staphylococcus aureus (strain Newman) protein is Uridylate kinase.